The primary structure comprises 231 residues: Phosphatidylserine decarboxylase proenzyme (231 aa).

The active-site Schiff-base intermediate with substrate; via pyruvic acid is serine 188. Residue serine 188 is modified to Pyruvic acid (Ser); by autocatalysis.

The protein belongs to the phosphatidylserine decarboxylase family. PSD-A subfamily. Heterodimer of a large membrane-associated beta subunit and a small pyruvoyl-containing alpha subunit. It depends on pyruvate as a cofactor. Post-translationally, is synthesized initially as an inactive proenzyme. Formation of the active enzyme involves a self-maturation process in which the active site pyruvoyl group is generated from an internal serine residue via an autocatalytic post-translational modification. Two non-identical subunits are generated from the proenzyme in this reaction, and the pyruvate is formed at the N-terminus of the alpha chain, which is derived from the carboxyl end of the proenzyme. The post-translation cleavage follows an unusual pathway, termed non-hydrolytic serinolysis, in which the side chain hydroxyl group of the serine supplies its oxygen atom to form the C-terminus of the beta chain, while the remainder of the serine residue undergoes an oxidative deamination to produce ammonia and the pyruvoyl prosthetic group on the alpha chain.

It is found in the cell membrane. It catalyses the reaction a 1,2-diacyl-sn-glycero-3-phospho-L-serine + H(+) = a 1,2-diacyl-sn-glycero-3-phosphoethanolamine + CO2. The protein operates within phospholipid metabolism; phosphatidylethanolamine biosynthesis; phosphatidylethanolamine from CDP-diacylglycerol: step 2/2. Catalyzes the formation of phosphatidylethanolamine (PtdEtn) from phosphatidylserine (PtdSer). This is Phosphatidylserine decarboxylase proenzyme from Rickettsia prowazekii (strain Madrid E).